A 215-amino-acid chain; its full sequence is 3-isopropylmalate dehydratase small subunit (215 aa).

Belongs to the LeuD family. LeuD type 1 subfamily. In terms of assembly, heterodimer of LeuC and LeuD.

It carries out the reaction (2R,3S)-3-isopropylmalate = (2S)-2-isopropylmalate. It participates in amino-acid biosynthesis; L-leucine biosynthesis; L-leucine from 3-methyl-2-oxobutanoate: step 2/4. Catalyzes the isomerization between 2-isopropylmalate and 3-isopropylmalate, via the formation of 2-isopropylmaleate. In Xylella fastidiosa (strain M12), this protein is 3-isopropylmalate dehydratase small subunit.